The primary structure comprises 357 residues: Phenylalanine--tRNA ligase alpha subunit (357 aa).

Residue Glu-257 coordinates Mg(2+).

Belongs to the class-II aminoacyl-tRNA synthetase family. Phe-tRNA synthetase alpha subunit type 1 subfamily. In terms of assembly, tetramer of two alpha and two beta subunits. Requires Mg(2+) as cofactor.

It localises to the cytoplasm. The catalysed reaction is tRNA(Phe) + L-phenylalanine + ATP = L-phenylalanyl-tRNA(Phe) + AMP + diphosphate + H(+). The chain is Phenylalanine--tRNA ligase alpha subunit from Ruegeria pomeroyi (strain ATCC 700808 / DSM 15171 / DSS-3) (Silicibacter pomeroyi).